We begin with the raw amino-acid sequence, 234 residues long: uncharacterized protein (234 aa).

4 helical membrane-spanning segments follow: residues 22 to 42, 59 to 79, 154 to 174, and 186 to 206; these read TFLN…IPLI, INWA…AYLI, FWIF…IFFC, and LLSL…IFAL.

The protein localises to the cell membrane. This is an uncharacterized protein from Escherichia coli (strain K12).